The primary structure comprises 141 residues: ATP synthase epsilon chain 1 (141 aa).

Belongs to the ATPase epsilon chain family. F-type ATPases have 2 components, CF(1) - the catalytic core - and CF(0) - the membrane proton channel. CF(1) has five subunits: alpha(3), beta(3), gamma(1), delta(1), epsilon(1). CF(0) has three main subunits: a, b and c.

It localises to the cell inner membrane. Produces ATP from ADP in the presence of a proton gradient across the membrane. This Thiobacillus denitrificans (strain ATCC 25259 / T1) protein is ATP synthase epsilon chain 1.